The chain runs to 149 residues: Protein FAM72A (149 aa).

It belongs to the FAM72 family. In terms of assembly, interacts with UNG. In terms of tissue distribution, expressed at high levels in stomach and also in kidney and, at low levels, in heart (at protein level). In the stomach, highly expressed in foveolar cells, parietal cells and chief cells (at protein level). In kidney, expressed in endothelial cells, mesangial and epithelial cells (parietal and visceral epithelium) around glomerulus (at protein level).

It localises to the cytoplasm. The protein resides in the mitochondrion. May play a role in the regulation of cellular reactive oxygen species metabolism. May participate in cell growth regulation. This Bos taurus (Bovine) protein is Protein FAM72A (FAM72A).